The following is a 195-amino-acid chain: Holliday junction branch migration complex subunit RuvA (195 aa).

The tract at residues 1–63 (MIASVRGEVI…EDSMTLYGFV (63 aa)) is domain I. Residues 64–142 (DGDARDLFLT…PVSAGGGAAV (79 aa)) are domain II. The tract at residues 143–150 (GGHAIRGP) is flexible linker. The interval 150–195 (PVVEALVGLGFAAKQAEEATDKVLANDPEATTSSALRAALSMLGKK) is domain III.

This sequence belongs to the RuvA family. As to quaternary structure, homotetramer. Forms an RuvA(8)-RuvB(12)-Holliday junction (HJ) complex. HJ DNA is sandwiched between 2 RuvA tetramers; dsDNA enters through RuvA and exits via RuvB. An RuvB hexamer assembles on each DNA strand where it exits the tetramer. Each RuvB hexamer is contacted by two RuvA subunits (via domain III) on 2 adjacent RuvB subunits; this complex drives branch migration. In the full resolvosome a probable DNA-RuvA(4)-RuvB(12)-RuvC(2) complex forms which resolves the HJ.

It localises to the cytoplasm. Functionally, the RuvA-RuvB-RuvC complex processes Holliday junction (HJ) DNA during genetic recombination and DNA repair, while the RuvA-RuvB complex plays an important role in the rescue of blocked DNA replication forks via replication fork reversal (RFR). RuvA specifically binds to HJ cruciform DNA, conferring on it an open structure. The RuvB hexamer acts as an ATP-dependent pump, pulling dsDNA into and through the RuvAB complex. HJ branch migration allows RuvC to scan DNA until it finds its consensus sequence, where it cleaves and resolves the cruciform DNA. In Mycolicibacterium smegmatis (strain ATCC 700084 / mc(2)155) (Mycobacterium smegmatis), this protein is Holliday junction branch migration complex subunit RuvA.